The chain runs to 65 residues: Large ribosomal subunit protein uL29 (65 aa).

Belongs to the universal ribosomal protein uL29 family.

The sequence is that of Large ribosomal subunit protein uL29 from Dehalococcoides mccartyi (strain ATCC BAA-2266 / KCTC 15142 / 195) (Dehalococcoides ethenogenes (strain 195)).